A 318-amino-acid polypeptide reads, in one-letter code: Pantothenate kinase (318 aa).

ATP is bound at residue 96–103 (GSVAVGKS).

The protein belongs to the prokaryotic pantothenate kinase family.

The protein resides in the cytoplasm. The catalysed reaction is (R)-pantothenate + ATP = (R)-4'-phosphopantothenate + ADP + H(+). Its pathway is cofactor biosynthesis; coenzyme A biosynthesis; CoA from (R)-pantothenate: step 1/5. In Rhodopseudomonas palustris (strain BisB5), this protein is Pantothenate kinase.